We begin with the raw amino-acid sequence, 260 residues long: UPF0246 protein APP7_0648 (260 aa).

Belongs to the UPF0246 family.

The protein is UPF0246 protein APP7_0648 of Actinobacillus pleuropneumoniae serotype 7 (strain AP76).